The sequence spans 819 residues: Lon protease (819 aa).

The span at 1-14 shows a compositional bias: polar residues; sequence MNSTNNTDSQNLDP. A disordered region spans residues 1–40; sequence MNSTNNTDSQNLDPNASEVEKLLDESAEAEEKVDDHTPPS. Residues 18 to 38 are compositionally biased toward basic and acidic residues; the sequence is EVEKLLDESAEAEEKVDDHTP. Residues 42 to 239 enclose the Lon N-terminal domain; it reads LFILPLNKRP…KALVLLKKEL (198 aa). 392-399 is a binding site for ATP; that stretch reads GPPGVGKT. In terms of domain architecture, Lon proteolytic spans 634-818; that stretch reads KTPVGVATGL…DDVFKIAFPG (185 aa). Catalysis depends on residues Ser-724 and Lys-767.

The protein belongs to the peptidase S16 family. In terms of assembly, homohexamer. Organized in a ring with a central cavity.

It is found in the cytoplasm. The enzyme catalyses Hydrolysis of proteins in presence of ATP.. Its function is as follows. ATP-dependent serine protease that mediates the selective degradation of mutant and abnormal proteins as well as certain short-lived regulatory proteins. Required for cellular homeostasis and for survival from DNA damage and developmental changes induced by stress. Degrades polypeptides processively to yield small peptide fragments that are 5 to 10 amino acids long. Binds to DNA in a double-stranded, site-specific manner. This chain is Lon protease, found in Chlamydia trachomatis serovar D (strain ATCC VR-885 / DSM 19411 / UW-3/Cx).